A 535-amino-acid polypeptide reads, in one-letter code: KNR4/SMI1 homolog (535 aa).

Positions 354-363 (ERKLPEEPKR) are enriched in basic and acidic residues. The interval 354 to 535 (ERKLPEEPKR…LKDDFENVAL (182 aa)) is disordered. 3 stretches are compositionally biased toward polar residues: residues 364-384 (TVSSSQGSQNTVEPAEQQETA), 397-407 (TSLSVDNTGTK), and 456-469 (ESTNAVENTETSQE). Over residues 474–483 (TSEKPEEKPK) the composition is skewed to basic and acidic residues. Basic residues predominate over residues 484 to 494 (KQSKKASKKKG). 2 stretches are compositionally biased toward basic and acidic residues: residues 495–509 (KKDEKKDTDSKTKEP) and 524–535 (EKLKDDFENVAL).

The protein belongs to the KNR4/SMI1 family.

This is KNR4/SMI1 homolog from Kluyveromyces lactis (strain ATCC 8585 / CBS 2359 / DSM 70799 / NBRC 1267 / NRRL Y-1140 / WM37) (Yeast).